Here is a 529-residue protein sequence, read N- to C-terminus: Peptide chain release factor 3 (529 aa).

Residues 11–280 (AKRRTFAIIS…GLVEWAPAPM (270 aa)) form the tr-type G domain. Residues 20–27 (SHPDAGKT), 88–92 (DTPGH), and 142–145 (NKLD) each bind GTP.

It belongs to the TRAFAC class translation factor GTPase superfamily. Classic translation factor GTPase family. PrfC subfamily.

It localises to the cytoplasm. Functionally, increases the formation of ribosomal termination complexes and stimulates activities of RF-1 and RF-2. It binds guanine nucleotides and has strong preference for UGA stop codons. It may interact directly with the ribosome. The stimulation of RF-1 and RF-2 is significantly reduced by GTP and GDP, but not by GMP. This Shigella flexneri serotype 5b (strain 8401) protein is Peptide chain release factor 3.